A 226-amino-acid chain; its full sequence is ATP synthase F(0) complex subunit a (226 aa).

A run of 6 helical transmembrane segments spans residues 6–26 (FASF…IIMF), 68–88 (WSLM…LGLL), 97–117 (QLSM…FTGF), 136–156 (LLIP…PVAL), 164–184 (ITAG…LLNI), and 189–209 (AFIT…VALI).

The protein belongs to the ATPase A chain family. Component of the ATP synthase complex composed at least of ATP5F1A/subunit alpha, ATP5F1B/subunit beta, ATP5MC1/subunit c (homooctomer), MT-ATP6/subunit a, MT-ATP8/subunit 8, ATP5ME/subunit e, ATP5MF/subunit f, ATP5MG/subunit g, ATP5MK/subunit k, ATP5MJ/subunit j, ATP5F1C/subunit gamma, ATP5F1D/subunit delta, ATP5F1E/subunit epsilon, ATP5PF/subunit F6, ATP5PB/subunit b, ATP5PD/subunit d, ATP5PO/subunit OSCP. ATP synthase complex consists of a soluble F(1) head domain (subunits alpha(3) and beta(3)) - the catalytic core - and a membrane F(0) domain - the membrane proton channel (subunits c, a, 8, e, f, g, k and j). These two domains are linked by a central stalk (subunits gamma, delta, and epsilon) rotating inside the F1 region and a stationary peripheral stalk (subunits F6, b, d, and OSCP). Interacts with DNAJC30; interaction is direct.

It is found in the mitochondrion inner membrane. It catalyses the reaction H(+)(in) = H(+)(out). Subunit a, of the mitochondrial membrane ATP synthase complex (F(1)F(0) ATP synthase or Complex V) that produces ATP from ADP in the presence of a proton gradient across the membrane which is generated by electron transport complexes of the respiratory chain. ATP synthase complex consist of a soluble F(1) head domain - the catalytic core - and a membrane F(1) domain - the membrane proton channel. These two domains are linked by a central stalk rotating inside the F(1) region and a stationary peripheral stalk. During catalysis, ATP synthesis in the catalytic domain of F(1) is coupled via a rotary mechanism of the central stalk subunits to proton translocation. With the subunit c (ATP5MC1), forms the proton-conducting channel in the F(0) domain, that contains two crucial half-channels (inlet and outlet) that facilitate proton movement from the mitochondrial intermembrane space (IMS) into the matrix. Protons are taken up via the inlet half-channel and released through the outlet half-channel, following a Grotthuss mechanism. The protein is ATP synthase F(0) complex subunit a of Sus scrofa (Pig).